The following is a 451-amino-acid chain: Tubulin gamma-2 chain (451 aa).

Serine 131 carries the phosphoserine; by BRSK1 modification. Residue 142–148 (AGGTGSG) participates in GTP binding.

Belongs to the tubulin family. Component of the gamma-tubulin ring complex (gTuRC) consisting of TUBGCP2, TUBGCP3, TUBGCP4, TUBGCP5 and TUBGCP6 and gamma-tubulin TUBG1 or TUBG2. TUBGCP2, TUBGCP3, TUBGCP4, TUBGCP5 and TUBGCP6 assemble in a 5:5:2:1:1 stoichiometry; each is associated with a gamma-tubulin, thereby arranging 14 gamma-tubulins in a helical manner. Gamma-tubulin at the first position is blocked by TUBGCP3 at the last position, allowing 13 protafilaments to grow into a microtubule. Interacts with alpha-beta tubulin heterodimers; the interaction allows microtubules to nucleate from the gTuRC. In terms of processing, phosphorylation at Ser-131 by BRSK1 regulates centrosome duplication, possibly by mediating relocation of gamma-tubulin and its associated proteins from the cytoplasm to the centrosome.

The protein localises to the cytoplasm. Its subcellular location is the cytoskeleton. It is found in the microtubule organizing center. It localises to the centrosome. Its function is as follows. Tubulin is the major constituent of microtubules, protein filaments consisting of alpha- and beta-tubulin heterodimers. Gamma-tubulin is a key component of the gamma-tubulin ring complex (gTuRC) which mediates microtubule nucleation. The gTuRC regulates the minus-end nucleation of alpha-beta tubulin heterodimers that grow into microtubule protafilaments, a critical step in centrosome duplication and spindle formation. This Homo sapiens (Human) protein is Tubulin gamma-2 chain (TUBG2).